Consider the following 191-residue polypeptide: Calcium-activated potassium channel subunit beta-1 (191 aa).

The Cytoplasmic segment spans residues 1 to 18 (MGKKLVMAQKRGETRALC). The helical transmembrane segment at 19–39 (LGVAMVVCAAITYYVLGTTVL) threads the bilayer. The Extracellular segment spans residues 40 to 155 (PLYQKSVWTQ…VVYQRLYGPQ (116 aa)). 2 N-linked (GlcNAc...) asparagine glycosylation sites follow: N80 and N142. Residues 156–176 (VLLFSFFWPTFLLTGGLLLIA) form a helical membrane-spanning segment. At 177–191 (MVKLNRSLSILAAQK) the chain is on the cytoplasmic side.

It belongs to the KCNMB (TC 8.A.14.1) family. KCNMB1 subfamily. Interacts with KCNMA1 tetramer. There are probably 4 molecules of KCMNB1 per KCNMA1 tetramer. In terms of processing, N-glycosylated. In terms of tissue distribution, expressed in many tissues containing smooth muscles. In brain and heart, it is not expressed except in the vasculature, such as cerebral arteries, aorta and corona arteries.

Its subcellular location is the membrane. Regulatory subunit of the calcium activated potassium KCNMA1 (maxiK) channel. Modulates the calcium sensitivity and gating kinetics of KCNMA1, thereby contributing to KCNMA1 channel diversity. Increases the apparent Ca(2+)/voltage sensitivity of the KCNMA1 channel. It also modifies KCNMA1 channel kinetics and alters its pharmacological properties. It slows down the activation and the deactivation kinetics of the channel. Acts as a negative regulator of smooth muscle contraction by enhancing the calcium sensitivity to KCNMA1. Its presence is also a requirement for internal binding of the KCNMA1 channel opener dehydrosoyasaponin I (DHS-1) triterpene glycoside and for external binding of the agonist hormone 17-beta-estradiol (E2). Increases the binding activity of charybdotoxin (CTX) toxin to KCNMA1 peptide blocker by increasing the CTX association rate and decreasing the dissociation rate. The polypeptide is Calcium-activated potassium channel subunit beta-1 (Kcnmb1) (Mus musculus (Mouse)).